We begin with the raw amino-acid sequence, 60 residues long: Large ribosomal subunit protein bL32 (60 aa).

The protein belongs to the bacterial ribosomal protein bL32 family.

The polypeptide is Large ribosomal subunit protein bL32 (Moorella thermoacetica (strain ATCC 39073 / JCM 9320)).